The sequence spans 87 residues: Hemocyanin alpha chain (87 aa).

The protein belongs to the tyrosinase family. Hemocyanin subfamily. Polymer that contains six different types of chains (alpha, beta, gamma, delta, epsilon, and zeta). In terms of tissue distribution, hemolymph.

The protein localises to the secreted. It localises to the extracellular space. Functionally, hemocyanins are copper-containing oxygen carriers occurring freely dissolved in the hemolymph of many mollusks and arthropods. This is Hemocyanin alpha chain from Tachypleus tridentatus (Japanese horseshoe crab).